The sequence spans 265 residues: MANQKQMRTQILITDIPSGKFTSKWPTQLEKTLFKEQFPNLQSHLQYYTPLPFLNRIIIIFDNEDDTLQVFKFLQELLAKENSGPMKLFVTESLLNNQHPRSRSTDDAVSLQDNNLALLEDHRNKPLLSINTDPGVTGVDSSSLNKGGSSLSPDKSSLESPTMLKLSTDSKPFSYQEPLPKLSRSSSSTSNLSLNRSSQTSLPSQLENKDKSASGTKCLFASKPLGLTIDTSTRSNAASCTENDVNATASNPPKSPSITVNEFFH.

2 positions are modified to phosphoserine: Ser-104 and Ser-110. Disordered stretches follow at residues 127-213 (LLSI…DKSA) and 242-265 (ENDVNATASNPPKSPSITVNEFFH). Position 132 is a phosphothreonine (Thr-132). Composition is skewed to low complexity over residues 141 to 161 (SSSLNKGGSSLSPDKSSLESP) and 182 to 202 (LSRSSSSTSNLSLNRSSQTSL). Phosphoserine occurs at positions 152, 157, 160, 183, 187, 193, 201, and 255.

Phosphorylation of Ser-152 and Ser-160 is induced 2-fold in response to mating pheromone.

It localises to the cytoplasm. The protein is Regulator of calcineurin 2 (RCN2) of Saccharomyces cerevisiae (strain ATCC 204508 / S288c) (Baker's yeast).